A 282-amino-acid polypeptide reads, in one-letter code: Structure-specific endonuclease subunit slx1 (282 aa).

Positions 7–97 (GFYGVYLLFC…RLTHVPRKTK (91 aa)) constitute a GIY-YIG domain. The segment at 191–243 (CRVCYERVQDKDDSLHCFHPGCTLTAHIMCLAKLFLLNEPQNLIPVEGLCPSC) adopts an SLX1-type zinc-finger fold.

The protein belongs to the SLX1 family. As to quaternary structure, forms a heterodimer with slx4. Requires a divalent metal cation as cofactor.

The protein resides in the nucleus. Catalytic subunit of the slx1-slx4 structure-specific endonuclease that resolves DNA secondary structures generated during DNA repair and recombination. Has endonuclease activity towards branched DNA substrates, introducing single-strand cuts in duplex DNA close to junctions with ss-DNA. The chain is Structure-specific endonuclease subunit slx1 (slx1a) from Xenopus laevis (African clawed frog).